We begin with the raw amino-acid sequence, 387 residues long: MDLFEYQAKELFAKHNVPTSPGRVTDSAEDAKTIAEEIGRPVMVKAQVKTGGRGKAGGVKYAATPDDAFTHANNILGLDIKGHVVKKLLVAEASDIAEEYYISFLLDRANRTYLAMCSVEGGMEIEEVAATKPERLAKVPVDAVKGVDLAFARSIAEQGHLPAEVLDAAAVTIQKLWEVFVKEDATLVEVNPLVRTPDDQILALDGKVTLDENAGFRQPGHAEFEDRDATDPLELKAKENDLNYVKLDGQVGIIGNGAGLVMSTLDVVAYAGENHGGVKPANFLDIGGGASAAVMAAGLDVILGDSQVKSVFVNVFGGITACDAVANGIVQALQILGDEANKPLVVRLDGNNVEEGRRILAEANHPLVIQAETMDAGADKAAELANK.

In terms of domain architecture, ATP-grasp spans 9-236 (KELFAKHNVP…RDATDPLELK (228 aa)). ATP-binding positions include Lys-45, 52 to 54 (GRG), Ser-94, and Glu-99. Mg(2+) contacts are provided by Asn-191 and Asp-205. Substrate is bound by residues Asn-256 and 318 to 320 (GIT).

The protein belongs to the succinate/malate CoA ligase beta subunit family. In terms of assembly, heterotetramer of two alpha and two beta subunits. Requires Mg(2+) as cofactor.

The catalysed reaction is succinate + ATP + CoA = succinyl-CoA + ADP + phosphate. It catalyses the reaction GTP + succinate + CoA = succinyl-CoA + GDP + phosphate. The protein operates within carbohydrate metabolism; tricarboxylic acid cycle; succinate from succinyl-CoA (ligase route): step 1/1. Its function is as follows. Succinyl-CoA synthetase functions in the citric acid cycle (TCA), coupling the hydrolysis of succinyl-CoA to the synthesis of either ATP or GTP and thus represents the only step of substrate-level phosphorylation in the TCA. The beta subunit provides nucleotide specificity of the enzyme and binds the substrate succinate, while the binding sites for coenzyme A and phosphate are found in the alpha subunit. This chain is Succinate--CoA ligase [ADP-forming] subunit beta, found in Mycolicibacterium smegmatis (strain ATCC 700084 / mc(2)155) (Mycobacterium smegmatis).